The sequence spans 212 residues: Uridine kinase (212 aa).

Residue G13–T20 coordinates ATP.

Belongs to the uridine kinase family.

The protein localises to the cytoplasm. The catalysed reaction is uridine + ATP = UMP + ADP + H(+). The enzyme catalyses cytidine + ATP = CMP + ADP + H(+). It participates in pyrimidine metabolism; CTP biosynthesis via salvage pathway; CTP from cytidine: step 1/3. The protein operates within pyrimidine metabolism; UMP biosynthesis via salvage pathway; UMP from uridine: step 1/1. This is Uridine kinase from Bacillus cereus (strain ATCC 10987 / NRS 248).